Consider the following 350-residue polypeptide: NAD-dependent protein deacetylase sirtuin-2 (350 aa).

The Nuclear export signal motif lies at 4 to 14 (LRNLFTQTLGL). Serine 16 bears the Phosphoserine mark. The Deacetylase sirtuin-type domain occupies 20–301 (RLLDELTLEG…LALADLLGWK (282 aa)). NAD(+) contacts are provided by residues 48 to 52 (AGIST) and 58 to 60 (DFR). Serine 63 is modified (phosphoserine). NAD(+) is bound at residue 130 to 133 (QNID). Residue histidine 150 is the Proton acceptor of the active site. Zn(2+) is bound by residues cysteine 158 and cysteine 163. Serine 170 is modified (phosphoserine). Cysteine 184 and cysteine 187 together coordinate Zn(2+). NAD(+) is bound by residues 225–226 (TS), 249–251 (NKE), and cysteine 287. The tract at residues 312 to 350 (ANIDAQSGSQASNPSATVSPRKSPPPAKEAARTKEKEEH) is disordered. Over residues 315–331 (DAQSGSQASNPSATVSP) the composition is skewed to polar residues. 2 positions are modified to phosphoserine: serine 330 and serine 334. A compositionally biased stretch (basic and acidic residues) spans 340 to 350 (EAARTKEKEEH).

Belongs to the sirtuin family. Class I subfamily. In terms of assembly, interacts with CDC20, FOXO3 and FZR1. Associates with microtubules in primary cortical mature neurons. Homotrimer. Interacts (via both phosphorylated, unphosphorylated, active or inactive forms) with HDAC6; the interaction is necessary for the complex to interact with alpha-tubulin, suggesting that these proteins belong to a large complex that deacetylates the cytoskeleton. Interacts with FOXO1; the interaction is disrupted upon serum-starvation or oxidative stress, leading to increased level of acetylated FOXO1 and induction of autophagy. Interacts with RELA; the interaction occurs in the cytoplasm and is increased in a TNF-alpha-dependent manner. Interacts with HOXA10; the interaction is direct. Interacts with YWHAB and YWHAG; the interactions occur in a AKT-dependent manner and increase SIRT2-dependent TP53 deacetylation. Interacts with MAPK1/ERK2 and MAPK3/ERK1; the interactions increase SIRT2 stability and deacetylation activity. Interacts (phosphorylated form) with KMT5A isoform 2; the interaction is direct, stimulates KMT5A-mediated methyltransferase activity on histone at 'Lys-20' (H4K20me1) and is increased in a H(2)O(2)-induced oxidative stress-dependent manner. Interacts with G6PD; the interaction is enhanced by H(2)O(2) treatment. Interacts with a G1/S-specific cyclin E-CDK2 complex. Interacts with AURKA, CDK5R1 (p35 form) and CDK5 and HIF1A. Interacts with the tRNA ligase SARS1; recruited to the VEGFA promoter via interaction with SARS1. Interacts with BEX4; negatively regulates alpha-tubulin deacetylation by SIRT2. It depends on Zn(2+) as a cofactor. In terms of processing, phosphorylated at phosphoserine and phosphothreonine. Phosphorylated at Ser-330 by a mitotic kinase CDK1/cyclin B at the G2/M transition; phosphorylation regulates the delay in cell-cycle progression. Phosphorylated at Ser-330 by a mitotic kinase G1/S-specific cyclin E/Cdk2 complex; phosphorylation inactivates SIRT2-mediated alpha-tubulin deacetylation and thereby negatively regulates cell adhesion, cell migration and neurite outgrowth during neuronal differentiation. Phosphorylated by cyclin A/Cdk2 and p35-Cdk5 complexes and to a lesser extent by the cyclin D3/Cdk4 and cyclin B/Cdk1, in vitro. Dephosphorylated at Ser-330 by CDC14A and CDC14B around early anaphase. Acetylated by EP300; acetylation leads both to the decreased of SIRT2-mediated alpha-tubulin deacetylase activity and SIRT2-mediated down-regulation of TP53 transcriptional activity. Post-translationally, ubiquitinated. Expressed in the cerebellum, cerebral cortex and cervival spinal cord. Expressed in Purkinje cells, oligodendrocytes and Schwann cells (at protein level). Expressed in the central nervous system (CNS).

It is found in the nucleus. It localises to the cytoplasm. Its subcellular location is the perinuclear region. The protein localises to the cytoskeleton. The protein resides in the microtubule organizing center. It is found in the centrosome. It localises to the centriole. Its subcellular location is the spindle. The protein localises to the midbody. The protein resides in the chromosome. It is found in the perikaryon. It localises to the cell projection. Its subcellular location is the growth cone. The protein localises to the myelin membrane. It catalyses the reaction N(6)-acetyl-L-lysyl-[protein] + NAD(+) + H2O = 2''-O-acetyl-ADP-D-ribose + nicotinamide + L-lysyl-[protein]. The catalysed reaction is N(6)-tetradecanoyl-L-lysyl-[protein] + NAD(+) + H2O = 2''-O-tetradecanoyl-ADP-D-ribose + nicotinamide + L-lysyl-[protein]. The enzyme catalyses N(6)-hexadecanoyl-L-lysyl-[protein] + NAD(+) + H2O = 2''-O-hexadecanoyl-ADP-D-ribose + nicotinamide + L-lysyl-[protein]. Inhibited by Sirtinol, A3 and M15 small molecules. Inhibited by nicotinamide. Inhibited by a macrocyclic peptide inhibitor S2iL5. Inhibited by EP300-induced acetylation. In terms of biological role, NAD-dependent protein deacetylase, which deacetylates internal lysines on histone and alpha-tubulin as well as many other proteins such as key transcription factors. Participates in the modulation of multiple and diverse biological processes such as cell cycle control, genomic integrity, microtubule dynamics, cell differentiation, metabolic networks, and autophagy. Plays a major role in the control of cell cycle progression and genomic stability. Functions in the antephase checkpoint preventing precocious mitotic entry in response to microtubule stress agents, and hence allowing proper inheritance of chromosomes. Positively regulates the anaphase promoting complex/cyclosome (APC/C) ubiquitin ligase complex activity by deacetylating CDC20 and FZR1, then allowing progression through mitosis. Associates both with chromatin at transcriptional start sites (TSSs) and enhancers of active genes. Plays a role in cell cycle and chromatin compaction through epigenetic modulation of the regulation of histone H4 'Lys-20' methylation (H4K20me1) during early mitosis. Specifically deacetylates histone H4 at 'Lys-16' (H4K16ac) between the G2/M transition and metaphase enabling H4K20me1 deposition by KMT5A leading to ulterior levels of H4K20me2 and H4K20me3 deposition throughout cell cycle, and mitotic S-phase progression. Deacetylates KMT5A modulating KMT5A chromatin localization during the mitotic stress response. Also deacetylates histone H3 at 'Lys-57' (H3K56ac) during the mitotic G2/M transition. During oocyte meiosis progression, may deacetylate histone H4 at 'Lys-16' (H4K16ac) and alpha-tubulin, regulating spindle assembly and chromosome alignment by influencing microtubule dynamics and kinetochore function. Deacetylates histone H4 at 'Lys-16' (H4K16ac) at the VEGFA promoter and thereby contributes to regulate expression of VEGFA, a key regulator of angiogenesis. Deacetylates alpha-tubulin at 'Lys-40' and hence controls neuronal motility, oligodendroglial cell arbor projection processes and proliferation of non-neuronal cells. Phosphorylation at Ser-368 by a G1/S-specific cyclin E-CDK2 complex inactivates SIRT2-mediated alpha-tubulin deacetylation, negatively regulating cell adhesion, cell migration and neurite outgrowth during neuronal differentiation. Deacetylates PARD3 and participates in the regulation of Schwann cell peripheral myelination formation during early postnatal development and during postinjury remyelination. Involved in several cellular metabolic pathways. Plays a role in the regulation of blood glucose homeostasis by deacetylating and stabilizing phosphoenolpyruvate carboxykinase PCK1 activity in response to low nutrient availability. Acts as a key regulator in the pentose phosphate pathway (PPP) by deacetylating and activating the glucose-6-phosphate G6PD enzyme, and therefore, stimulates the production of cytosolic NADPH to counteract oxidative damage. Maintains energy homeostasis in response to nutrient deprivation as well as energy expenditure by inhibiting adipogenesis and promoting lipolysis. Attenuates adipocyte differentiation by deacetylating and promoting FOXO1 interaction to PPARG and subsequent repression of PPARG-dependent transcriptional activity. Plays a role in the regulation of lysosome-mediated degradation of protein aggregates by autophagy in neuronal cells. Deacetylates FOXO1 in response to oxidative stress or serum deprivation, thereby negatively regulating FOXO1-mediated autophagy. Deacetylates a broad range of transcription factors and co-regulators regulating target gene expression. Deacetylates transcriptional factor FOXO3 stimulating the ubiquitin ligase SCF(SKP2)-mediated FOXO3 ubiquitination and degradation. Deacetylates HIF1A and therefore promotes HIF1A degradation and inhibition of HIF1A transcriptional activity in tumor cells in response to hypoxia. Deacetylates RELA in the cytoplasm inhibiting NF-kappaB-dependent transcription activation upon TNF-alpha stimulation. Inhibits transcriptional activation by deacetylating p53/TP53 and EP300. Also deacetylates EIF5A. Functions as a negative regulator on oxidative stress-tolerance in response to anoxia-reoxygenation conditions. Plays a role as tumor suppressor. In addition to protein deacetylase activity, also has activity toward long-chain fatty acyl groups and mediates protein-lysine demyristoylation and depalmitoylation of target proteins, such as ARF6 and KRAS, thereby regulating their association with membranes. The polypeptide is NAD-dependent protein deacetylase sirtuin-2 (Sirt2) (Rattus norvegicus (Rat)).